We begin with the raw amino-acid sequence, 634 residues long: Chaperone protein HtpG (634 aa).

An a; substrate-binding region spans residues 1–342 (MTVETDKQTL…SSDLSLNVSR (342 aa)). A b region spans residues 343-559 (EILQSGPVVD…QGDLGLQMRQ (217 aa)). The interval 560-634 (LLEASGQAVP…LNKLLLELSV (75 aa)) is c.

It belongs to the heat shock protein 90 family. In terms of assembly, homodimer.

Its subcellular location is the cytoplasm. Molecular chaperone. Has ATPase activity. This Xanthomonas euvesicatoria pv. vesicatoria (strain 85-10) (Xanthomonas campestris pv. vesicatoria) protein is Chaperone protein HtpG.